The following is a 543-amino-acid chain: MAAAKAEMQLMSPLQISDPFGSFPHSPTMDNYPKLEEMMLLSNGAPQFLGAAGAPEGSGSNSSSSSSGGGGGGGGGSNSSSSSSTFNPQADTGEQPYEHLTAESFPDISLNNEKVLVETSYPSQTTRLPPITYTGRFSLEPAPNSGNTLWPEPLFSLVSGLVSMTNPPASSSSAPSPAASSASASQSPPLSCAVPSNDSSPIYSAAPTFPTPNTDIFPEPQSQAFPGSAGTALQYPPPAYPAAKGGFQVPMIPDYLFPQQQGDLGLGTPDQKPFQGLESRTQQPSLTPLSTIKAFATQSGSQDLKALNTSYQSQLIKPSRMRKYPNRPSKTPPHERPYACPVESCDRRFSRSDELTRHIRIHTGQKPFQCRICMRNFSRSDHLTTHIRTHTGEKPFACDICGRKFARSDERKRHTKIHLRQKDKKADKSVVASSATSSLSSYPSPVATSYPSPVTTSYPSPATTSYPSPVPTSFSSPGSSTYPSPVHSGFPSPSVATTYSSVPPAFPAQVSSFPSSAVTNSFSASTGLSDMTATFSPRTIEIC.

Disordered regions lie at residues 1-105 (MAAA…AESF), 165-213 (TNPP…PTPN), and 264-284 (LGLG…TQQP). A compositionally biased stretch (low complexity) spans 57-66 (GSGSNSSSSS). Residues 67 to 77 (SGGGGGGGGGS) are compositionally biased toward gly residues. Low complexity predominate over residues 167–189 (PPASSSSAPSPAASSASASQSPP). Residue K305 forms a Glycyl lysine isopeptide (Lys-Gly) (interchain with G-Cter in SUMO2) linkage. The segment at 318 to 339 (PSRMRKYPNRPSKTPPHERPYA) is disordered. C2H2-type zinc fingers lie at residues 338-362 (YACP…IRIH), 368-390 (FQCR…IRTH), and 396-418 (FACD…TKIH). The segment at 409 to 487 (DERKRHTKIH…GSSTYPSPVH (79 aa)) is disordered. Residues 413-423 (RHTKIHLRQKD) show a composition bias toward basic residues. The segment covering 429-486 (SVVASSATSSLSSYPSPVATSYPSPVTTSYPSPATTSYPSPVPTSFSSPGSSTYPSPV) has biased composition (low complexity).

Belongs to the EGR C2H2-type zinc-finger protein family. In terms of assembly, interacts with SNAI1 and SP1 upon 12-O-tetradecanoylphorbol-13-acetate (TPA) induction. In terms of tissue distribution, detected in neutrophils (at protein level).

It is found in the nucleus. Its subcellular location is the cytoplasm. In terms of biological role, transcriptional regulator. Recognizes and binds to the DNA sequence 5'-GCG(T/G)GGGCG-3'(EGR-site) in the promoter region of target genes. Binds double-stranded target DNA, irrespective of the cytosine methylation status. Regulates the transcription of numerous target genes, and thereby plays an important role in regulating the response to growth factors, DNA damage, and ischemia. Plays a role in the regulation of cell survival, proliferation and cell death. Activates expression of p53/TP53 and TGFB1, and thereby helps prevent tumor formation. Required for normal progress through mitosis and normal proliferation of hepatocytes after partial hepatectomy. Mediates responses to ischemia and hypoxia; regulates the expression of proteins such as IL1B and CXCL2 that are involved in inflammatory processes and development of tissue damage after ischemia. Regulates biosynthesis of luteinizing hormone (LHB) in the pituitary. Regulates the amplitude of the expression rhythms of clock genes: BMAL1, PER2 and NR1D1 in the liver via the activation of PER1 (clock repressor) transcription. Regulates the rhythmic expression of core-clock gene BMAL1 in the suprachiasmatic nucleus (SCN). This chain is Early growth response protein 1 (EGR1), found in Homo sapiens (Human).